We begin with the raw amino-acid sequence, 288 residues long: Ribosomal protein L11 methyltransferase (288 aa).

Residues Thr-134, Gly-157, Asp-179, and Asn-224 each coordinate S-adenosyl-L-methionine.

Belongs to the methyltransferase superfamily. PrmA family.

The protein resides in the cytoplasm. The catalysed reaction is L-lysyl-[protein] + 3 S-adenosyl-L-methionine = N(6),N(6),N(6)-trimethyl-L-lysyl-[protein] + 3 S-adenosyl-L-homocysteine + 3 H(+). Its function is as follows. Methylates ribosomal protein L11. This chain is Ribosomal protein L11 methyltransferase, found in Caulobacter sp. (strain K31).